Here is a 408-residue protein sequence, read N- to C-terminus: Putative glutamate--cysteine ligase 2 (408 aa).

This sequence belongs to the glutamate--cysteine ligase type 2 family. YbdK subfamily.

It catalyses the reaction L-cysteine + L-glutamate + ATP = gamma-L-glutamyl-L-cysteine + ADP + phosphate + H(+). In terms of biological role, ATP-dependent carboxylate-amine ligase which exhibits weak glutamate--cysteine ligase activity. This Bradyrhizobium sp. (strain BTAi1 / ATCC BAA-1182) protein is Putative glutamate--cysteine ligase 2.